Reading from the N-terminus, the 526-residue chain is MSSATPAAAAPDTVLVVDFGAQYAQLIARRVREARVYSEIVPSSMPVEEILAKNPAAIILSGGPSSVYEAGAPTLDRSLFEAGVPVFGMCYGFQLMAQTLGGTVDNSGAREYGRTELAVSKPSSTLFEGTPAEQSVWMSHGDACSAAPEGFTVTGSTDVVPVAAFENDEKKLYGVQYHPEVMHSTHGQQVLEHFLYRGAGLSPDWTTGNVIEEQVAAIRAQVGDRRAICGLSGGVDSAVAAALVQKAIGSQLTCVYVDHGLMRKGETEQVEKDFVAATGVQLKVVDASERFLGALAGVSDPEQKRKIIGREFIRVFEQAQLEIMREDGPEVAFLVQGTLYPDVVESGGGTGTANIKSHHNVGGLPDDIEFELVEPLRQLFKDEVRMVGQELGLPDEIVQRQPFPGPGLGIRIVGEVTKERLDLLREADAIAREELTAAGLDRDIWQCPVVLLADVRSVGVQGDGRTYGHPIVLRPVSSEDAMTADWSRLPYEVLSKISTRITNEVTDVNRVVLDVTSKPPGTIEWE.

Residues 13 to 204 form the Glutamine amidotransferase type-1 domain; it reads TVLVVDFGAQ…LYRGAGLSPD (192 aa). Cysteine 90 acts as the Nucleophile in catalysis. Active-site residues include histidine 178 and glutamate 180. The GMPS ATP-PPase domain occupies 205–400; the sequence is WTTGNVIEEQ…LGLPDEIVQR (196 aa). 232 to 238 provides a ligand contact to ATP; the sequence is SGGVDSA.

As to quaternary structure, homodimer.

The enzyme catalyses XMP + L-glutamine + ATP + H2O = GMP + L-glutamate + AMP + diphosphate + 2 H(+). It functions in the pathway purine metabolism; GMP biosynthesis; GMP from XMP (L-Gln route): step 1/1. In terms of biological role, catalyzes the synthesis of GMP from XMP. The polypeptide is GMP synthase [glutamine-hydrolyzing] (guaA) (Streptomyces coelicolor (strain ATCC BAA-471 / A3(2) / M145)).